A 28-amino-acid polypeptide reads, in one-letter code: Phospholipase A2 pseudexin C chain (28 aa).

Tyrosine 28 is a binding site for Ca(2+).

It belongs to the phospholipase A2 family. Group I subfamily. The cofactor is Ca(2+). In terms of tissue distribution, expressed by the venom gland.

The protein localises to the secreted. It catalyses the reaction a 1,2-diacyl-sn-glycero-3-phosphocholine + H2O = a 1-acyl-sn-glycero-3-phosphocholine + a fatty acid + H(+). PLA2 catalyzes the calcium-dependent hydrolysis of the 2-acyl groups in 3-sn-phosphoglycerides. In Pseudechis porphyriacus (Red-bellied black snake), this protein is Phospholipase A2 pseudexin C chain.